Here is a 93-residue protein sequence, read N- to C-terminus: U12-lycotoxin-Ls1b (93 aa).

The signal sequence occupies residues 1-18 (MKFAVILLFSLVVLAVAS). The propeptide occupies 19–38 (ESVEEVRREIDIEDLPEQQR).

The protein belongs to the neurotoxin 31 family. Contains 5 disulfide bonds. Expressed by the venom gland.

The protein localises to the secreted. In Lycosa singoriensis (Wolf spider), this protein is U12-lycotoxin-Ls1b.